Here is a 501-residue protein sequence, read N- to C-terminus: Lysine--tRNA ligase (501 aa).

Mg(2+) is bound by residues E412 and E419.

Belongs to the class-II aminoacyl-tRNA synthetase family. In terms of assembly, homodimer. Requires Mg(2+) as cofactor.

The protein localises to the cytoplasm. It catalyses the reaction tRNA(Lys) + L-lysine + ATP = L-lysyl-tRNA(Lys) + AMP + diphosphate. This chain is Lysine--tRNA ligase, found in Chlorobium luteolum (strain DSM 273 / BCRC 81028 / 2530) (Pelodictyon luteolum).